The chain runs to 659 residues: Cysteine-rich receptor-like protein kinase 5 (659 aa).

A signal peptide spans 1–24; sequence MSAYTSLNFLFLLTFFIGSLRVSA. Over 25–279 the chain is Extracellular; that stretch reads QLQDPTYVGH…FPPGKGKNST (255 aa). 2 Gnk2-homologous domains span residues 28–132 and 138–243; these read DPTY…DRNI and TTTT…VYPF. N-linked (GlcNAc...) asparagine glycosylation is found at Asn-175 and Asn-277. A helical membrane pass occupies residues 280 to 300; the sequence is VIIIAIVVPVAISVLICVAVF. Residues 301–659 lie on the Cytoplasmic side of the membrane; it reads SFHASKRAKK…AASITILAPR (359 aa). The 280-residue stretch at 340–619 folds into the Protein kinase domain; the sequence is FSMCNKLGQG…QMLTTSSIAL (280 aa). Residues 346–354 and Lys-368 each bind ATP; that span reads LGQGGFGQV. Tyr-413 carries the phosphotyrosine modification. Catalysis depends on Asp-465, which acts as the Proton acceptor. Thr-505 bears the Phosphothreonine mark. Tyr-513 is modified (phosphotyrosine).

It belongs to the protein kinase superfamily. Ser/Thr protein kinase family. CRK subfamily. In terms of assembly, interacts with CRKIP1 (KAPP), CRKIP2 and CRKIP3, three kinase-associated type 2C proteins.

The protein resides in the membrane. The enzyme catalyses L-seryl-[protein] + ATP = O-phospho-L-seryl-[protein] + ADP + H(+). It carries out the reaction L-threonyl-[protein] + ATP = O-phospho-L-threonyl-[protein] + ADP + H(+). Involved in multiple distinct defense responses. May function as a disease resistance (R) protein. The polypeptide is Cysteine-rich receptor-like protein kinase 5 (CRK5) (Arabidopsis thaliana (Mouse-ear cress)).